We begin with the raw amino-acid sequence, 347 residues long: NADH-ubiquinone oxidoreductase chain 2 (347 aa).

A run of 11 helical transmembrane segments spans residues 3-23 (PLIF…VMTT), 25-45 (HWVM…PILM), 59-79 (YFLT…INLT), 96-116 (IIMT…FWVP), 122-142 (VQLS…MSIL), 149-169 (INLD…GWGG), 178-198 (ILAY…VYNP), 201-221 (ALLN…MLMV), 237-257 (MPLL…LPPL), 274-294 (DSMI…YFYM), and 326-346 (LSPL…LALL).

Belongs to the complex I subunit 2 family. As to quaternary structure, core subunit of respiratory chain NADH dehydrogenase (Complex I) which is composed of 45 different subunits. Interacts with TMEM242.

Its subcellular location is the mitochondrion inner membrane. The enzyme catalyses a ubiquinone + NADH + 5 H(+)(in) = a ubiquinol + NAD(+) + 4 H(+)(out). In terms of biological role, core subunit of the mitochondrial membrane respiratory chain NADH dehydrogenase (Complex I) which catalyzes electron transfer from NADH through the respiratory chain, using ubiquinone as an electron acceptor. Essential for the catalytic activity and assembly of complex I. The chain is NADH-ubiquinone oxidoreductase chain 2 from Nyctimene aello (Broad-striped tube-nosed fruit bat).